Reading from the N-terminus, the 2082-residue chain is Polyketide synthase ThaQ (2082 aa).

The tract at residues 398-468 (NDARRAGSAR…DSAHDSAHAA (71 aa)) is disordered. 3 stretches are compositionally biased toward basic and acidic residues: residues 399 to 411 (DARRAGSARRDAR), 419 to 430 (HGARHEAAHDAQ), and 439 to 468 (ADAHDSAHDSAHDSAHDSAHDSAHDSAHAA). Residues 470–546 (ALRREGRAYL…ALLDHLLAAH (77 aa)) enclose the Carrier 1 domain. The residue at position 507 (serine 507) is an O-(pantetheine 4'-phosphoryl)serine. Low complexity-rich tracts occupy residues 560 to 582 (APARGVGARAQAAQASGEGRAAP) and 593 to 605 (DTPSSAPSSAPAR). The disordered stretch occupies residues 560-655 (APARGVGARA…RYAPRAPHPD (96 aa)). Positions 606–631 (PDQPAPSGPPAQPAQPAPRADTPPPA) are enriched in pro residues. The region spanning 658–1077 (AEPVAIIGIS…GVNAHVVLEE (420 aa)) is the Ketosynthase family 3 (KS3) domain. Disordered regions lie at residues 1250–1269 (APGTRHASAGEATEAAEAAE) and 1603–1653 (ARGP…VKSD). Low complexity-rich tracts occupy residues 1256 to 1269 (ASAGEATEAAEAAE) and 1612 to 1624 (SPDAQPPAARAQA). Over residues 1640–1653 (ADSKAGPKSEVKSD) the composition is skewed to basic and acidic residues. The 75-residue stretch at 1669–1743 (ASVAASVEDA…ALVRAVAEAV (75 aa)) folds into the Carrier 2 domain. At serine 1703 the chain carries O-(pantetheine 4'-phosphoryl)serine. The AB hydrolase-1 domain maps to 1792–2022 (PRVVLIPGLG…GAGHAVFLTH (231 aa)). Low complexity predominate over residues 2045–2067 (GAAESVESVEATEAAEAARSPAV). Positions 2045–2082 (GAAESVESVEATEAAEAARSPAVARRRATDDAPVGSDA) are disordered.

Requires pantetheine 4'-phosphate as cofactor.

Its subcellular location is the cytoplasm. It functions in the pathway antibiotic biosynthesis. Involved in production of the polyketide antibiotic thailandamide. The sequence is that of Polyketide synthase ThaQ from Burkholderia thailandensis (strain ATCC 700388 / DSM 13276 / CCUG 48851 / CIP 106301 / E264).